We begin with the raw amino-acid sequence, 380 residues long: Gap junction gamma-1 protein (380 aa).

The Cytoplasmic segment spans residues 1–22 (MSWSFLTRLLDEISNHSTFVGK). Residues 23–45 (IWLTLFIIFRIVLTVVGGESIYY) form a helical membrane-spanning segment. Topologically, residues 46–75 (DEQSKFVCNTQQPGCENVCYDAFAPLSHVR) are extracellular. Residues 76–95 (FWVFQIILITTPTIMYLGFA) traverse the membrane as a helical segment. The Cytoplasmic portion of the chain corresponds to 96–171 (MHKIARSNDV…RRIKRDGLMK (76 aa)). A helical membrane pass occupies residues 172–194 (VYILQLLSRIIFEVGFLFGQYIL). Residues 195-228 (YGFEVAPSYVCTRSPCPHTVDCFVSRPTEKTIFL) lie on the Extracellular side of the membrane. Residues 229 to 251 (LIMYAVSCLCLSLTVLEILHLGL) form a helical membrane-spanning segment. Residues 252-380 (SGIRDAFRRR…GSKCEKGIHA (129 aa)) are Cytoplasmic-facing. A disordered region spans residues 337–380 (AYQNGESSPSRSSSPESNGTAVEQNRLNFAQEKQGSKCEKGIHA). Positions 342-353 (ESSPSRSSSPES) are enriched in low complexity. A compositionally biased stretch (polar residues) spans 354–369 (NGTAVEQNRLNFAQEK). The segment covering 370-380 (QGSKCEKGIHA) has biased composition (basic and acidic residues).

The protein belongs to the connexin family. Gamma-type subfamily. As to quaternary structure, a connexon is composed of a hexamer of connexins.

The protein localises to the cell membrane. It is found in the cell junction. It localises to the gap junction. One gap junction consists of a cluster of closely packed pairs of transmembrane channels, the connexons, through which materials of low MW diffuse from one cell to a neighboring cell. Participates in a developmental pathway for formation of the notochord and tail. This is Gap junction gamma-1 protein (gjc1) from Danio rerio (Zebrafish).